Consider the following 395-residue polypeptide: GPI-anchor transamidase (395 aa).

A signal peptide spans 1–27; the sequence is MAVTDSLSRAATVLATVLLLSFGSVAA. At 28–368 the chain is on the lumenal side; it reads SHIEDQAEQF…PKLKDWHPPG (341 aa). Asp79, Ile82, Glu118, and Asp120 together coordinate Ca(2+). The active-site Proton donor is His164. Catalysis depends on Cys206, which acts as the Nucleophile; acyl-thioester intermediate. 3 residues coordinate a protein: Cys206, Ser232, and Ser234. The segment at 231 to 236 is autoinhibitory loop; that stretch reads DSLSHQ. Cysteines 275 and 280 form a disulfide. The helical transmembrane segment at 369 to 385 threads the bilayer; that stretch reads GFILGLWALIIMVFFKT. The Cytoplasmic portion of the chain corresponds to 386–395; the sequence is YGIKHMKFIF.

Belongs to the peptidase C13 family. As to quaternary structure, heteropentamer. Part of the GPI-anchor transamidase complex, consisting of PIGK, PIGT, PIGS, PIGU and GAA1. Interacts with GPAA1. Interacts with PIGT; this interaction, via a disulfide link, stabilizes the expression of GAA1 and PIGK and links them to PIGS. Post-translationally, the disulfide bond between PIGK/GPI8 and PIGT is important for normal enzyme activity.

The protein localises to the endoplasmic reticulum membrane. The protein operates within glycolipid biosynthesis; glycosylphosphatidylinositol-anchor biosynthesis. Its activity is regulated as follows. In the absence of proproteins substrates, exists in an inactive state with a disrupted catalytic site by an autoinhibitory loop. The binding of proprotein substrates, particularly the CSP region, to GPI-T triggers concerted conformational changes that alleviate the inhibition by the autoinhibitory loop. Meanwhile, proprotein residues near the omega- site induce the formation of a catalytic cleft for catalysis, following which the products are released and GPI-T reverts to the inactive state. Its function is as follows. Catalytic subunit of the glycosylphosphatidylinositol-anchor (GPI-anchor) transamidase (GPI-T) complex that catalyzes the formation of the linkage between a proprotein and a GPI-anchor and participates in GPI anchored protein biosynthesis. Recognizes diverse proproteins at a C-terminal signal peptide (CSP) region that lacks consensus sequence and replaces it with a GPI-anchor via a transamidation reaction. Transamidation catalysis reaction follows a two-phase mechanism. In the acyl-enzyme phase, the carbonyl group of the proproteins's omega-site undergoes a nucleophilic attack forming an enzyme-substrate thioester bond. Followed by a general acid catalysis that allows CSP releasing, regenerating the carbonyl, and forming the acyl-enzyme intermediate. In the GPI-anchor attachment phase, the amino group of the GPI-anchor's ethanolamine phosphate, the one on third mannose (EtNP3), mediates a nucleophilic attack on the carbonyl of the acyl-enzyme intermediate, replacing the CSP, allowing GPI-anchor attachment to the omega-residue, therefore forming the product and freeing the enzyme. In Homo sapiens (Human), this protein is GPI-anchor transamidase.